A 1155-amino-acid polypeptide reads, in one-letter code: DNA-directed RNA polymerase subunit beta (1155 aa).

The protein belongs to the RNA polymerase beta chain family. As to quaternary structure, the RNAP catalytic core consists of 2 alpha, 1 beta, 1 beta' and 1 omega subunit. When a sigma factor is associated with the core the holoenzyme is formed, which can initiate transcription.

The catalysed reaction is RNA(n) + a ribonucleoside 5'-triphosphate = RNA(n+1) + diphosphate. DNA-dependent RNA polymerase catalyzes the transcription of DNA into RNA using the four ribonucleoside triphosphates as substrates. This chain is DNA-directed RNA polymerase subunit beta, found in Borrelia garinii subsp. bavariensis (strain ATCC BAA-2496 / DSM 23469 / PBi) (Borreliella bavariensis).